The chain runs to 497 residues: Cytochrome P450 2D6 (497 aa).

Asp-301 lines the substrate pocket. Residue Cys-443 coordinates heme.

The protein belongs to the cytochrome P450 family. It depends on heme as a cofactor.

The protein resides in the endoplasmic reticulum membrane. It is found in the microsome membrane. The catalysed reaction is (5Z,8Z,11Z,14Z)-eicosatetraenoate + reduced [NADPH--hemoprotein reductase] + O2 = (8R,9S)-epoxy-(5Z,11Z,14Z)-eicosatrienoate + oxidized [NADPH--hemoprotein reductase] + H2O + H(+). It catalyses the reaction (5Z,8Z,11Z,14Z)-eicosatetraenoate + reduced [NADPH--hemoprotein reductase] + O2 = (11R,12S)-epoxy-(5Z,8Z,14Z)-eicosatrienoate + oxidized [NADPH--hemoprotein reductase] + H2O + H(+). It carries out the reaction (5Z,8Z,11Z,14Z)-eicosatetraenoate + reduced [NADPH--hemoprotein reductase] + O2 = (14S,15R)-epoxy-(5Z,8Z,11Z)-eicosatrienoate + oxidized [NADPH--hemoprotein reductase] + H2O + H(+). The enzyme catalyses N-(5Z,8Z,11Z,14Z-eicosatetraenoyl)-ethanolamine + reduced [NADPH--hemoprotein reductase] + O2 = N-(8,9-epoxy-5Z,11Z,14Z-eicosatrienoyl)-ethanolamine + oxidized [NADPH--hemoprotein reductase] + H2O + H(+). The catalysed reaction is N-(5Z,8Z,11Z,14Z-eicosatetraenoyl)-ethanolamine + reduced [NADPH--hemoprotein reductase] + O2 = N-(11,12-epoxy-5Z,8Z,14Z-eicosatrienoyl)-ethanolamine + oxidized [NADPH--hemoprotein reductase] + H2O + H(+). It catalyses the reaction N-(5Z,8Z,11Z,14Z-eicosatetraenoyl)-ethanolamine + reduced [NADPH--hemoprotein reductase] + O2 = N-(14,15-epoxy-5Z,8Z,11Z-eicosatrienoyl)-ethanolamine + oxidized [NADPH--hemoprotein reductase] + H2O + H(+). It carries out the reaction N-(5Z,8Z,11Z,14Z-eicosatetraenoyl)-ethanolamine + reduced [NADPH--hemoprotein reductase] + O2 = N-(20-hydroxy-5Z,8Z,11Z,14Z-eicosatetraenoyl)-ethanolamine + oxidized [NADPH--hemoprotein reductase] + H2O + H(+). The enzyme catalyses (5Z,8Z,11Z,14Z,17Z)-eicosapentaenoate + reduced [NADPH--hemoprotein reductase] + O2 = (17S,18R)-epoxy-(5Z,8Z,11Z,14Z)-eicosatetraenoate + oxidized [NADPH--hemoprotein reductase] + H2O + H(+). The catalysed reaction is (4Z,7Z,10Z,13Z,16Z,19Z)-docosahexaenoate + reduced [NADPH--hemoprotein reductase] + O2 = (19R,20S)-epoxy-(4Z,7Z,10Z,13Z,16Z)-docosapentaenoate + oxidized [NADPH--hemoprotein reductase] + H2O + H(+). It catalyses the reaction (4Z,7Z,10Z,13Z,16Z,19Z)-docosahexaenoate + reduced [NADPH--hemoprotein reductase] + O2 = (19S,20R)-epoxy-(4Z,7Z,10Z,13Z,16Z)-docosapentaenoate + oxidized [NADPH--hemoprotein reductase] + H2O + H(+). It carries out the reaction cholesterol + reduced [NADPH--hemoprotein reductase] + O2 = 25-hydroxycholesterol + oxidized [NADPH--hemoprotein reductase] + H2O + H(+). The enzyme catalyses all-trans-retinol + reduced [NADPH--hemoprotein reductase] + O2 = all-trans-retinal + oxidized [NADPH--hemoprotein reductase] + 2 H2O + H(+). The protein operates within cofactor metabolism; retinol metabolism. Its pathway is lipid metabolism; fatty acid metabolism. It participates in steroid metabolism; cholesterol metabolism. Its function is as follows. A cytochrome P450 monooxygenase involved in the metabolism of fatty acids, steroids and retinoids. Mechanistically, uses molecular oxygen inserting one oxygen atom into a substrate, and reducing the second into a water molecule, with two electrons provided by NADPH via cytochrome P450 reductase (NADPH--hemoprotein reductase). Catalyzes the epoxidation of double bonds of polyunsaturated fatty acids (PUFA). Metabolizes endocannabinoid arachidonoylethanolamide (anandamide) to 20-hydroxyeicosatetraenoic acid ethanolamide (20-HETE-EA) and 8,9-, 11,12-, and 14,15-epoxyeicosatrienoic acid ethanolamides (EpETrE-EAs), potentially modulating endocannabinoid system signaling. Catalyzes the hydroxylation of carbon-hydrogen bonds. Metabolizes cholesterol toward 25-hydroxycholesterol, a physiological regulator of cellular cholesterol homeostasis. Catalyzes the oxidative transformations of all-trans retinol to all-trans retinal, a precursor for the active form all-trans-retinoic acid. Also involved in the oxidative metabolism of drugs such as antiarrhythmics, adrenoceptor antagonists, and tricyclic antidepressants. The sequence is that of Cytochrome P450 2D6 from Homo sapiens (Human).